A 283-amino-acid chain; its full sequence is tRNA dimethylallyltransferase (283 aa).

The interaction with substrate tRNA stretch occupies residues 5-8; sequence DSML.

This sequence belongs to the IPP transferase family. In terms of assembly, monomer. Mg(2+) serves as cofactor.

The enzyme catalyses adenosine(37) in tRNA + dimethylallyl diphosphate = N(6)-dimethylallyladenosine(37) in tRNA + diphosphate. Functionally, catalyzes the transfer of a dimethylallyl group onto the adenine at position 37 in tRNAs that read codons beginning with uridine, leading to the formation of N6-(dimethylallyl)adenosine (i(6)A). The sequence is that of tRNA dimethylallyltransferase from Desulforamulus reducens (strain ATCC BAA-1160 / DSM 100696 / MI-1) (Desulfotomaculum reducens).